The chain runs to 152 residues: MSEKYVVTWDMLQIHARKLASRLMPSEQWKGIIAVSRGGLVPGALLARELGIRHVDTVCISSYDHDNQRELKVLKRAEGDGEGFIVIDDLVDTGGTAVAIREMYPKAHFVTIFAKPAGRPLVDDYVIDIPQDTWIEQPWDMGVVFVPPISGR.

Residues 37–38 (RG), Arg69, and 88–96 (DDLVDTGGT) contribute to the 5-phospho-alpha-D-ribose 1-diphosphate site. Arg69 serves as a coordination point for GMP. Asp89 contributes to the Mg(2+) binding site. 2 residues coordinate guanine: Asp92 and Ile135. 2 residues coordinate xanthine: Asp92 and Ile135. GMP contacts are provided by residues 92 to 96 (DTGGT) and 134 to 135 (WI).

This sequence belongs to the purine/pyrimidine phosphoribosyltransferase family. XGPT subfamily. Homotetramer. It depends on Mg(2+) as a cofactor.

The protein resides in the cell inner membrane. The enzyme catalyses GMP + diphosphate = guanine + 5-phospho-alpha-D-ribose 1-diphosphate. It catalyses the reaction XMP + diphosphate = xanthine + 5-phospho-alpha-D-ribose 1-diphosphate. It carries out the reaction IMP + diphosphate = hypoxanthine + 5-phospho-alpha-D-ribose 1-diphosphate. Its pathway is purine metabolism; GMP biosynthesis via salvage pathway; GMP from guanine: step 1/1. The protein operates within purine metabolism; XMP biosynthesis via salvage pathway; XMP from xanthine: step 1/1. In terms of biological role, purine salvage pathway enzyme that catalyzes the transfer of the ribosyl-5-phosphate group from 5-phospho-alpha-D-ribose 1-diphosphate (PRPP) to the N9 position of the 6-oxopurines guanine and xanthine to form the corresponding ribonucleotides GMP (guanosine 5'-monophosphate) and XMP (xanthosine 5'-monophosphate), with the release of PPi. To a lesser extent, also acts on hypoxanthine. The polypeptide is Xanthine-guanine phosphoribosyltransferase (Citrobacter koseri (strain ATCC BAA-895 / CDC 4225-83 / SGSC4696)).